The sequence spans 634 residues: 1-deoxy-D-xylulose-5-phosphate synthase (634 aa).

Thiamine diphosphate-binding positions include histidine 74 and 115 to 117 (AHS). Residue aspartate 146 participates in Mg(2+) binding. Thiamine diphosphate contacts are provided by residues 147-148 (GA), asparagine 176, tyrosine 283, and glutamate 365. Asparagine 176 contributes to the Mg(2+) binding site.

Belongs to the transketolase family. DXPS subfamily. As to quaternary structure, homodimer. The cofactor is Mg(2+). Requires thiamine diphosphate as cofactor.

The enzyme catalyses D-glyceraldehyde 3-phosphate + pyruvate + H(+) = 1-deoxy-D-xylulose 5-phosphate + CO2. It functions in the pathway metabolic intermediate biosynthesis; 1-deoxy-D-xylulose 5-phosphate biosynthesis; 1-deoxy-D-xylulose 5-phosphate from D-glyceraldehyde 3-phosphate and pyruvate: step 1/1. Its function is as follows. Catalyzes the acyloin condensation reaction between C atoms 2 and 3 of pyruvate and glyceraldehyde 3-phosphate to yield 1-deoxy-D-xylulose-5-phosphate (DXP). In Burkholderia thailandensis (strain ATCC 700388 / DSM 13276 / CCUG 48851 / CIP 106301 / E264), this protein is 1-deoxy-D-xylulose-5-phosphate synthase.